Consider the following 216-residue polypeptide: Octanoyltransferase (216 aa).

In terms of domain architecture, BPL/LPL catalytic spans 34-209 (ENTIDEIWLV…KMNQQLDYSH (176 aa)). Substrate contacts are provided by residues 73–80 (RGGQITFH), 140–142 (SLG), and 153–155 (GLA). Cys171 serves as the catalytic Acyl-thioester intermediate.

This sequence belongs to the LipB family.

The protein resides in the cytoplasm. The catalysed reaction is octanoyl-[ACP] + L-lysyl-[protein] = N(6)-octanoyl-L-lysyl-[protein] + holo-[ACP] + H(+). It participates in protein modification; protein lipoylation via endogenous pathway; protein N(6)-(lipoyl)lysine from octanoyl-[acyl-carrier-protein]: step 1/2. Functionally, catalyzes the transfer of endogenously produced octanoic acid from octanoyl-acyl-carrier-protein onto the lipoyl domains of lipoate-dependent enzymes. Lipoyl-ACP can also act as a substrate although octanoyl-ACP is likely to be the physiological substrate. This chain is Octanoyltransferase, found in Psychromonas ingrahamii (strain DSM 17664 / CCUG 51855 / 37).